Here is a 192-residue protein sequence, read N- to C-terminus: GTP cyclohydrolase-2 (192 aa).

A GTP-binding site is contributed by Arg50 to Glu54. Zn(2+)-binding residues include Cys55, Cys66, and Cys68. GTP is bound by residues Glu92–Arg94 and Thr114. The active-site Proton acceptor is the Asp126. Catalysis depends on Arg128, which acts as the Nucleophile. Positions 149 and 154 each coordinate GTP.

Belongs to the GTP cyclohydrolase II family. The cofactor is Zn(2+).

It catalyses the reaction GTP + 4 H2O = 2,5-diamino-6-hydroxy-4-(5-phosphoribosylamino)-pyrimidine + formate + 2 phosphate + 3 H(+). The protein operates within cofactor biosynthesis; riboflavin biosynthesis; 5-amino-6-(D-ribitylamino)uracil from GTP: step 1/4. Its function is as follows. Catalyzes the conversion of GTP to 2,5-diamino-6-ribosylamino-4(3H)-pyrimidinone 5'-phosphate (DARP), formate and pyrophosphate. The polypeptide is GTP cyclohydrolase-2 (Helicobacter acinonychis (strain Sheeba)).